Reading from the N-terminus, the 99-residue chain is Ubiquitin-related modifier 1 homolog 2 (99 aa).

1-thioglycine is present on Gly99. Gly99 is covalently cross-linked (Glycyl lysine isopeptide (Gly-Lys) (interchain with K-? in acceptor proteins)).

Belongs to the URM1 family. C-terminal thiocarboxylation occurs in 2 steps, it is first acyl-adenylated (-COAMP) via the hesA/moeB/thiF part of the MOCS3 homolog, then thiocarboxylated (-COSH) via the rhodanese domain of the MOCS3 homolog.

The protein resides in the cytoplasm. It participates in tRNA modification; 5-methoxycarbonylmethyl-2-thiouridine-tRNA biosynthesis. Acts as a sulfur carrier required for 2-thiolation of mcm(5)S(2)U at tRNA wobble positions of cytosolic tRNA(Lys), tRNA(Glu) and tRNA(Gln). Serves as sulfur donor in tRNA 2-thiolation reaction by being thiocarboxylated (-COSH) at its C-terminus by MOCS3. The sulfur is then transferred to tRNA to form 2-thiolation of mcm(5)S(2)U. Also acts as a ubiquitin-like protein (UBL) that is covalently conjugated via an isopeptide bond to lysine residues of target proteins. The thiocarboxylated form serves as substrate for conjugation and oxidative stress specifically induces the formation of UBL-protein conjugates. The polypeptide is Ubiquitin-related modifier 1 homolog 2 (Arabidopsis thaliana (Mouse-ear cress)).